A 134-amino-acid chain; its full sequence is Large ribosomal subunit protein eL32 (134 aa).

It belongs to the eukaryotic ribosomal protein eL32 family.

The protein is Large ribosomal subunit protein eL32 (RpL32) of Apis mellifera (Honeybee).